We begin with the raw amino-acid sequence, 239 residues long: Fatty acid metabolism regulator protein (239 aa).

Residues 6-74 (QSPAGFAEEY…HGKPTKINNF (69 aa)) form the HTH gntR-type domain. Residues 34–53 (ERELSELIGVTRTTLREVLQ) constitute a DNA-binding region (H-T-H motif).

In terms of assembly, homodimer.

It is found in the cytoplasm. Multifunctional regulator of fatty acid metabolism. In Pectobacterium atrosepticum (strain SCRI 1043 / ATCC BAA-672) (Erwinia carotovora subsp. atroseptica), this protein is Fatty acid metabolism regulator protein.